The chain runs to 592 residues: Keratin, type II cytoskeletal 5 (592 aa).

The span at 1–18 (MSRQSSVSFRSGGSRSFS) shows a compositional bias: low complexity. Positions 1–20 (MSRQSSVSFRSGGSRSFSTA) are disordered. The tract at residues 1 to 169 (MSRQSSVSFR…DPSIQRVRTE (169 aa)) is head. Residues S5, S8, S16, and S21 each carry the phosphoserine modification. Residue T24 is modified to Phosphothreonine; by CDK1. Residues S26, S36, S50, S64, S71, S75, and S82 each carry the phosphoserine modification. Residue T153 is modified to Phosphothreonine; by CDK1. The residue at position 168 (T168) is a Phosphothreonine; by AURKB. Positions 170-205 (EREQIKTLNNKFASFIDKVRFLEQQNKVLDTKWTLL) are coil 1A. An IF rod domain is found at 170–483 (EREQIKTLNN…KLLEGEECRL (314 aa)). The tract at residues 206-224 (QEQGTKTVRQNLEPLFEQY) is linker 1. Residues 225–317 (INNLRRQLDS…FFDAELSQMQ (93 aa)) are coil 1B. Positions 318-340 (THVSDTSVVLSMDNNRNLDLDSI) are linker 12. The interval 341–479 (IAEVKAQYEE…ATYRKLLEGE (139 aa)) is coil 2. Residues 480–592 (ECRLSGEGVG…TSSSRKSFKS (113 aa)) form a tail region. The segment at 568-592 (GSGGGSSSSVKFVSTTSSSRKSFKS) is disordered. The span at 574–592 (SSSVKFVSTTSSSRKSFKS) shows a compositional bias: low complexity.

Belongs to the intermediate filament family. Heterodimer of a type I and a type II keratin. Heterodimer with type I keratin KRT25 leading to the formation of keratin intermediate filament (KIF) network. Forms a heterodimer (via 2B domains) with KRT14 (via 2B domains). Interacts with TCHP. Interacts with EPPK1. Interacts with AMELX. Interacts with PKP1 (via N-terminus) and PKP2. Post-translationally, phosphorylated by CDK1, AURKB and Rho-kinase, phosphorylation is regulated by the cell cycle. Thr-24 phosphorylation, mediated by CDK1, peaks during prometaphase or metaphase cells with phosphorylated filamentous structures evident throughout the cytoplasm during early mitosis. CDK1 phosphorylates Thr-24 in mitotic cells at the site of injury. In terms of processing, O-glycosylated.

It localises to the cytoplasm. Functionally, required for the formation of keratin intermediate filaments in the basal epidermis and maintenance of the skin barrier in response to mechanical stress. Regulates the recruitment of Langerhans cells to the epidermis, potentially by modulation of the abundance of macrophage chemotactic cytokines, macrophage inflammatory cytokines and CTNND1 localization in keratinocytes. The chain is Keratin, type II cytoskeletal 5 (KRT5) from Pan troglodytes (Chimpanzee).